Here is a 654-residue protein sequence, read N- to C-terminus: Amyloid beta precursor like protein 1 (654 aa).

A signal peptide spans 1-38 (MGPTSPAARGQGRRWRPPPLPLLLPLSLLLLRAQLAVG). The Extracellular segment spans residues 39–584 (NLAVGSPSAA…APSGTGVSRE (546 aa)). Residues 50 to 146 (APGSAQVAGL…PFHCLPGEFV (97 aa)) form a GFLD subdomain region. Positions 50–212 (APGSAQVAGL…RGVEYVCCPP (163 aa)) constitute an E1 domain. 6 disulfides stabilise this stretch: Cys-60–Cys-84, Cys-95–Cys-140, Cys-120–Cys-128, Cys-156–Cys-210, Cys-167–Cys-197, and Cys-181–Cys-209. The segment at 154–212 (EGCRFLHQERMDQCESSTRRHQEAQEACSSQGLILHGSGMLLPCGSDRFRGVEYVCCPP) is cuBD subdomain. Position 174 (His-174) interacts with Cu(2+). Residues Glu-206, Cys-209, and Cys-210 each coordinate Zn(2+). The disordered stretch occupies residues 214–297 (ATPNPSGMAA…VTPTPRPTDG (84 aa)). Positions 262 to 272 (QAEEEEEEEEE) are enriched in acidic residues. The E2 domain occupies 297–488 (GVDVYFGMPG…QELRPQIQEL (192 aa)). Heparin-binding regions lie at residues 314 to 346 (FLRAKMDLEERRMRQINEVMREWAMADSQSKNL) and 414 to 445 (LMALRRYLRAEQKEQRHTLRHYQHVAAVDPEK). Positions 446–463 (AQQMRFQVQTHLQVIEER) are collagen-binding. A glycan (N-linked (GlcNAc...) asparagine) is linked at Asn-465. A disordered region spans residues 497–580 (SELDASVPGS…RDELAPSGTG (84 aa)). Basic and acidic residues predominate over residues 508-523 (SEDKGSLQPPESKDDP). The span at 529-539 (KGSTDQESSSS) shows a compositional bias: polar residues. The N-linked (GlcNAc...) asparagine glycan is linked to Asn-555. His-565 is a Cu(2+) binding site. Residue His-565 participates in Zn(2+) binding. Residues 585–607 (ALSGLLIMGAGGGSLIVLSLLLL) traverse the membrane as a helical segment. The Basolateral sorting signal motif lies at 608–619 (RKKKPYGTISHG). Residues 608-654 (RKKKPYGTISHGVVEVDPMLTLEEQQLRELQRHGYENPTYRFLEERP) are Cytoplasmic-facing. The segment at 636–652 (ELQRHGYENPTYRFLEE) is interaction with DAB1. Residues 640–654 (HGYENPTYRFLEERP) form an interaction with DAB2 region. The NPXY motif; contains endocytosis signal signature appears at 644 to 647 (NPTY).

This sequence belongs to the APP family. In terms of assembly, monomer and homodimer. Heparin binding promotes homodimerization. Binds, via its C-terminus, to the PID domain of several cytoplasmic proteins, including APBB and APBA family members, MAPK8IP1 and DAB1. Binding to Dab1 inhibits its serine phosphorylation. Interacts with CPEB1. Interacts (via NPXY motif) with DAB2 (via PID domain); the interaction is impaired by tyrosine phosphorylation of the NPXY motif. Interacts (via NPXY motif) with DAB1. In terms of processing, proteolytically cleaved by caspases during neuronal apoptosis. Cleaved, in vitro, at Asp-624 by caspase-3. N- and O-glycosylated.

It localises to the cell membrane. Its subcellular location is the cytoplasm. In terms of biological role, may play a role in postsynaptic function. The C-terminal gamma-secretase processed fragment, ALID1, activates transcription activation through APBB1 (Fe65) binding. Couples to JIP signal transduction through C-terminal binding. May interact with cellular G-protein signaling pathways. Can regulate neurite outgrowth through binding to components of the extracellular matrix such as heparin and collagen I. The gamma-CTF peptide, C30, is a potent enhancer of neuronal apoptosis. In Mus musculus (Mouse), this protein is Amyloid beta precursor like protein 1 (Aplp1).